The chain runs to 249 residues: Aspartate/glutamate leucyltransferase (249 aa).

It belongs to the R-transferase family. Bpt subfamily.

The protein resides in the cytoplasm. It carries out the reaction N-terminal L-glutamyl-[protein] + L-leucyl-tRNA(Leu) = N-terminal L-leucyl-L-glutamyl-[protein] + tRNA(Leu) + H(+). The catalysed reaction is N-terminal L-aspartyl-[protein] + L-leucyl-tRNA(Leu) = N-terminal L-leucyl-L-aspartyl-[protein] + tRNA(Leu) + H(+). Functionally, functions in the N-end rule pathway of protein degradation where it conjugates Leu from its aminoacyl-tRNA to the N-termini of proteins containing an N-terminal aspartate or glutamate. The sequence is that of Aspartate/glutamate leucyltransferase from Brucella suis (strain ATCC 23445 / NCTC 10510).